Here is a 297-residue protein sequence, read N- to C-terminus: MLSTIFGSVCSIDLKIDADDNKKFAFLRKDKKGEKCPIFSDGEDINGTATISLKPGKKFEHYGIKLELIGQINILNDKANSYDFFSISKDLEPPGFLVESKQFKWKFSAVDKQHESYFGTNVQLRYFVRLNIIKGYSGNIQKEIDFIVQNLCIPPEINNTIKMEVGIEDCLHIEFEYDKSKYHLKDVVVGKVYFLLVRIKIKHMELDIIKMETSGVGKNYTTETVTLSKFEIMDGSPIKSECIPVRLYLSGFDLTPTYKNIQNKFSVKYYINLIIVDEEERRYFKKQEIFLWRKKMG.

It belongs to the VPS26 family. As to quaternary structure, component of the retromer complex, composed of VPS26, VPS29 and VPS35. As part of the retromer complex, interacts with the sorting receptor SORTLR/sortilin. Interacts with GTPase RAB7.

Its function is as follows. Plays a role in vesicular protein sorting. Component of the membrane-associated retromer complex which is essential in endosome-to-Golgi retrograde transport. The sequence is that of Vacuolar protein sorting-associated protein 26 from Plasmodium falciparum (isolate 3D7).